A 201-amino-acid polypeptide reads, in one-letter code: Small ribosomal subunit protein uS5 (201 aa).

The tract at residues 1–28 (MAHQNEQRGGGDRGRGRGRGRDRDQERD) is disordered. The S5 DRBM domain maps to 31-94 (LVDKLVHINR…DEAKKNMIRV (64 aa)). The interval 173–201 (SVAAKRGLKVGDLVNRRDDGASSPEAIEA) is disordered.

This sequence belongs to the universal ribosomal protein uS5 family. Part of the 30S ribosomal subunit. Contacts proteins S4 and S8.

Its function is as follows. With S4 and S12 plays an important role in translational accuracy. In terms of biological role, located at the back of the 30S subunit body where it stabilizes the conformation of the head with respect to the body. This Maricaulis maris (strain MCS10) (Caulobacter maris) protein is Small ribosomal subunit protein uS5.